We begin with the raw amino-acid sequence, 417 residues long: Gamma-glutamyl phosphate reductase (417 aa).

It belongs to the gamma-glutamyl phosphate reductase family.

It localises to the cytoplasm. It catalyses the reaction L-glutamate 5-semialdehyde + phosphate + NADP(+) = L-glutamyl 5-phosphate + NADPH + H(+). It participates in amino-acid biosynthesis; L-proline biosynthesis; L-glutamate 5-semialdehyde from L-glutamate: step 2/2. In terms of biological role, catalyzes the NADPH-dependent reduction of L-glutamate 5-phosphate into L-glutamate 5-semialdehyde and phosphate. The product spontaneously undergoes cyclization to form 1-pyrroline-5-carboxylate. This Escherichia coli O8 (strain IAI1) protein is Gamma-glutamyl phosphate reductase.